The primary structure comprises 143 residues: Peptide methionine sulfoxide reductase MsrB (143 aa).

The region spanning 16–139 is the MsrB domain; it reads DAELRRRLTP…NSAALNFESR (124 aa). Residues Cys-55, Cys-58, Cys-104, and Cys-107 each contribute to the Zn(2+) site. The Nucleophile role is filled by Cys-128.

This sequence belongs to the MsrB Met sulfoxide reductase family. Requires Zn(2+) as cofactor.

The catalysed reaction is L-methionyl-[protein] + [thioredoxin]-disulfide + H2O = L-methionyl-(R)-S-oxide-[protein] + [thioredoxin]-dithiol. This Burkholderia cenocepacia (strain HI2424) protein is Peptide methionine sulfoxide reductase MsrB.